We begin with the raw amino-acid sequence, 249 residues long: Chromosome-partitioning ATPase Soj (249 aa).

Residues K15, G16, G17, V18, G19, K20, T21, T22, P207, and N209 each coordinate ATP. An ADP-binding site is contributed by G17. ADP-binding residues include G19, K20, T21, T22, P207, and N209. T21 provides a ligand contact to Mg(2+).

It belongs to the ParA family. In terms of assembly, monomer in the absence of nucleotides or presence of ADP, in the presence of ATP is found in a monomer-dimer equilibrium. ATP-binding is required for DNA-binding. Probably interacts with Spo0J.

The catalysed reaction is ATP + H2O = ADP + phosphate + H(+). Its activity is regulated as follows. ATPase activity is stimulated 10-fold in the presence of Spo0J and parS DNA (a plasmid centromere-like site or plasmid DNA itself). The first 20 residues of Spo0J stimulate its ATPase activity by 8%. ATPase probably involved in chromosome partitioning. Cooperatively binds dsDNA, forming nucleoprotein filaments in a strictly ATP-dependent fashion. Can also bind ssDNA with lower affinity. This is Chromosome-partitioning ATPase Soj from Thermus thermophilus (strain ATCC BAA-163 / DSM 7039 / HB27).